We begin with the raw amino-acid sequence, 159 residues long: NAD(P)H-quinone oxidoreductase subunit J, chloroplastic (159 aa).

The protein belongs to the complex I 30 kDa subunit family. In terms of assembly, NDH is composed of at least 16 different subunits, 5 of which are encoded in the nucleus.

Its subcellular location is the plastid. The protein resides in the chloroplast thylakoid membrane. The catalysed reaction is a plastoquinone + NADH + (n+1) H(+)(in) = a plastoquinol + NAD(+) + n H(+)(out). It carries out the reaction a plastoquinone + NADPH + (n+1) H(+)(in) = a plastoquinol + NADP(+) + n H(+)(out). Its function is as follows. NDH shuttles electrons from NAD(P)H:plastoquinone, via FMN and iron-sulfur (Fe-S) centers, to quinones in the photosynthetic chain and possibly in a chloroplast respiratory chain. The immediate electron acceptor for the enzyme in this species is believed to be plastoquinone. Couples the redox reaction to proton translocation, and thus conserves the redox energy in a proton gradient. The sequence is that of NAD(P)H-quinone oxidoreductase subunit J, chloroplastic from Agrostis stolonifera (Creeping bentgrass).